The following is a 79-amino-acid chain: Small ribosomal subunit protein bS18 (79 aa).

It belongs to the bacterial ribosomal protein bS18 family. As to quaternary structure, part of the 30S ribosomal subunit. Forms a tight heterodimer with protein bS6.

In terms of biological role, binds as a heterodimer with protein bS6 to the central domain of the 16S rRNA, where it helps stabilize the platform of the 30S subunit. The polypeptide is Small ribosomal subunit protein bS18 (Streptococcus pneumoniae serotype 19F (strain G54)).